A 546-amino-acid chain; its full sequence is Alkaline phosphatase PafA (546 aa).

The N-terminal stretch at 1–25 is a signal peptide; sequence MLTPKKWLLGVLVVSGMLGAQKTNA. 2 residues coordinate Zn(2+): D38 and T79. The active-site Phosphothreonine intermediate is the T79. Substrate contacts are provided by residues N100 and 162–164; that span reads KDR. 5 residues coordinate Zn(2+): D305, H309, D352, H353, and H486.

The cofactor is Zn(2+).

Its subcellular location is the periplasm. It carries out the reaction a phosphate monoester + H2O = an alcohol + phosphate. With respect to regulation, strongly inhibited by orthovanadate and EDTA. Also inhibited by inorganic phosphate. In terms of biological role, alkaline phosphatase with broad substrate specificity. Has phosphatase activity towards nucleotide phosphates with a preference for ATP. Active towards a great variety of phosphomonoesters with the exception of 2',3'-cyclic AMP and myo-inositol hexakisphosphate. This chain is Alkaline phosphatase PafA, found in Elizabethkingia meningoseptica (Chryseobacterium meningosepticum).